A 171-amino-acid polypeptide reads, in one-letter code: MIFDSLTMTQSSLSLLLLTGAIFSISALYLTLFHRCATFSATSDLFLLVPLKFVSRDINDRLKTHYHHSCLGSPFLCIIFLFISPLLNYHFRSLVRPPKIHQKGSIPTLTKNAETRCSHHLKQAAATGEVCKVVVIIKGHILKDCSIFFFIIFPLIYPLFINCSSKYNGLQ.

Positions 1–24 are cleaved as a signal peptide; sequence MIFDSLTMTQSSLSLLLLTGAIFS. Topologically, residues 25 to 70 are extracellular; sequence ISALYLTLFHRCATFSATSDLFLLVPLKFVSRDINDRLKTHYHHSC. Residues 71–91 traverse the membrane as a helical segment; the sequence is LGSPFLCIIFLFISPLLNYHF. At 92–140 the chain is on the cytoplasmic side; sequence RSLVRPPKIHQKGSIPTLTKNAETRCSHHLKQAAATGEVCKVVVIIKGH. Residues 141–161 form a helical membrane-spanning segment; it reads ILKDCSIFFFIIFPLIYPLFI. At 162–171 the chain is on the extracellular side; the sequence is NCSSKYNGLQ.

It localises to the membrane. This is an uncharacterized protein from Saccharomyces cerevisiae (strain ATCC 204508 / S288c) (Baker's yeast).